Here is a 220-residue protein sequence, read N- to C-terminus: Octanoyltransferase (220 aa).

Positions 27 to 208 (PGTADEIWLC…QLARAHGQAV (182 aa)) constitute a BPL/LPL catalytic domain. Residues 66–73 (RGGQVTYH), 139–141 (ALG), and 152–154 (GLA) each bind substrate. Cysteine 170 functions as the Acyl-thioester intermediate in the catalytic mechanism.

The protein belongs to the LipB family.

It is found in the cytoplasm. The enzyme catalyses octanoyl-[ACP] + L-lysyl-[protein] = N(6)-octanoyl-L-lysyl-[protein] + holo-[ACP] + H(+). Its pathway is protein modification; protein lipoylation via endogenous pathway; protein N(6)-(lipoyl)lysine from octanoyl-[acyl-carrier-protein]: step 1/2. In terms of biological role, catalyzes the transfer of endogenously produced octanoic acid from octanoyl-acyl-carrier-protein onto the lipoyl domains of lipoate-dependent enzymes. Lipoyl-ACP can also act as a substrate although octanoyl-ACP is likely to be the physiological substrate. This chain is Octanoyltransferase, found in Bordetella bronchiseptica (strain ATCC BAA-588 / NCTC 13252 / RB50) (Alcaligenes bronchisepticus).